The primary structure comprises 701 residues: Elongation factor G (701 aa).

The region spanning 8-290 (ERYRNIGISA…AVVDYLPAPT (283 aa)) is the tr-type G domain. GTP contacts are provided by residues 17–24 (AHIDAGKT), 88–92 (DTPGH), and 142–145 (NKMD).

The protein belongs to the TRAFAC class translation factor GTPase superfamily. Classic translation factor GTPase family. EF-G/EF-2 subfamily.

It is found in the cytoplasm. Functionally, catalyzes the GTP-dependent ribosomal translocation step during translation elongation. During this step, the ribosome changes from the pre-translocational (PRE) to the post-translocational (POST) state as the newly formed A-site-bound peptidyl-tRNA and P-site-bound deacylated tRNA move to the P and E sites, respectively. Catalyzes the coordinated movement of the two tRNA molecules, the mRNA and conformational changes in the ribosome. This chain is Elongation factor G, found in Aeromonas hydrophila subsp. hydrophila (strain ATCC 7966 / DSM 30187 / BCRC 13018 / CCUG 14551 / JCM 1027 / KCTC 2358 / NCIMB 9240 / NCTC 8049).